The chain runs to 668 residues: UvrABC system protein B (668 aa).

The Helicase ATP-binding domain maps to glutamine 31–arginine 416. Position 44–51 (glycine 44–threonine 51) interacts with ATP. The Beta-hairpin motif lies at tyrosine 97–isoleucine 120. The Helicase C-terminal domain occupies glutamine 433 to isoleucine 596. The 36-residue stretch at glutamate 621–glutamine 656 folds into the UVR domain.

It belongs to the UvrB family. In terms of assembly, forms a heterotetramer with UvrA during the search for lesions. Interacts with UvrC in an incision complex.

The protein localises to the cytoplasm. The UvrABC repair system catalyzes the recognition and processing of DNA lesions. A damage recognition complex composed of 2 UvrA and 2 UvrB subunits scans DNA for abnormalities. Upon binding of the UvrA(2)B(2) complex to a putative damaged site, the DNA wraps around one UvrB monomer. DNA wrap is dependent on ATP binding by UvrB and probably causes local melting of the DNA helix, facilitating insertion of UvrB beta-hairpin between the DNA strands. Then UvrB probes one DNA strand for the presence of a lesion. If a lesion is found the UvrA subunits dissociate and the UvrB-DNA preincision complex is formed. This complex is subsequently bound by UvrC and the second UvrB is released. If no lesion is found, the DNA wraps around the other UvrB subunit that will check the other stand for damage. The sequence is that of UvrABC system protein B from Chlamydia trachomatis serovar A (strain ATCC VR-571B / DSM 19440 / HAR-13).